The following is a 131-amino-acid chain: UPF0342 protein DSY1594 (131 aa).

Belongs to the UPF0342 family.

This chain is UPF0342 protein DSY1594, found in Desulfitobacterium hafniense (strain Y51).